We begin with the raw amino-acid sequence, 151 residues long: Ubiquitin-conjugating enzyme E2 W (151 aa).

Positions 3–151 constitute a UBC core domain; sequence SMQKRLQKEL…TKWWYHDDTC (149 aa). The active-site Glycyl thioester intermediate is Cys91.

It belongs to the ubiquitin-conjugating enzyme family.

Its subcellular location is the nucleus. It catalyses the reaction S-ubiquitinyl-[E1 ubiquitin-activating enzyme]-L-cysteine + [E2 ubiquitin-conjugating enzyme]-L-cysteine = [E1 ubiquitin-activating enzyme]-L-cysteine + S-ubiquitinyl-[E2 ubiquitin-conjugating enzyme]-L-cysteine.. The enzyme catalyses S-ubiquitinyl-[E1 ubiquitin-activating enzyme]-L-cysteine + [acceptor protein]-N-terminal-amino acid = [E1 ubiquitin-activating enzyme]-L-cysteine + N-terminal-ubiquitinyl-[acceptor protein].. The protein operates within protein modification; protein ubiquitination. Its function is as follows. Accepts ubiquitin from the E1 complex and catalyzes its covalent attachment to other proteins. Catalyzes monoubiquitination. Involved in degradation of misfolded chaperone substrate and DNA repair. This is Ubiquitin-conjugating enzyme E2 W (ube2w) from Xenopus tropicalis (Western clawed frog).